The sequence spans 419 residues: Putative nucleobase-ascorbate transporter 9 (419 aa).

Gly residues predominate over residues Met-1–Gly-22. The interval Met-1–Glu-28 is disordered. The next 10 membrane-spanning stretches (helical) occupy residues Leu-64 to Gly-84, Val-91 to Thr-111, Leu-113 to Ser-133, Ile-153 to Trp-173, Ser-184 to Val-204, Gly-220 to Val-240, Ser-273 to Ala-293, Arg-313 to Ala-333, Phe-334 to Val-354, and Phe-370 to Phe-390.

Belongs to the nucleobase:cation symporter-2 (NCS2) (TC 2.A.40) family.

It localises to the membrane. The polypeptide is Putative nucleobase-ascorbate transporter 9 (NAT9) (Arabidopsis thaliana (Mouse-ear cress)).